A 459-amino-acid polypeptide reads, in one-letter code: Chaperone SurA (459 aa).

Positions 1-23 are cleaved as a signal peptide; sequence MNHRLVALSVASLALLAPLTVPA. PpiC domains follow at residues 197–301 and 312–411; these read VQQI…KVLE and VTQS…QLME.

The protein localises to the periplasm. The catalysed reaction is [protein]-peptidylproline (omega=180) = [protein]-peptidylproline (omega=0). Its function is as follows. Chaperone involved in the correct folding and assembly of outer membrane proteins. Recognizes specific patterns of aromatic residues and the orientation of their side chains, which are found more frequently in integral outer membrane proteins. May act in both early periplasmic and late outer membrane-associated steps of protein maturation. The polypeptide is Chaperone SurA (Albidiferax ferrireducens (strain ATCC BAA-621 / DSM 15236 / T118) (Rhodoferax ferrireducens)).